The sequence spans 288 residues: Bifunctional protein FolD (288 aa).

NADP(+)-binding positions include 164–166 (GRS) and Val230.

This sequence belongs to the tetrahydrofolate dehydrogenase/cyclohydrolase family. In terms of assembly, homodimer.

The catalysed reaction is (6R)-5,10-methylene-5,6,7,8-tetrahydrofolate + NADP(+) = (6R)-5,10-methenyltetrahydrofolate + NADPH. It carries out the reaction (6R)-5,10-methenyltetrahydrofolate + H2O = (6R)-10-formyltetrahydrofolate + H(+). It functions in the pathway one-carbon metabolism; tetrahydrofolate interconversion. Functionally, catalyzes the oxidation of 5,10-methylenetetrahydrofolate to 5,10-methenyltetrahydrofolate and then the hydrolysis of 5,10-methenyltetrahydrofolate to 10-formyltetrahydrofolate. This Thermomicrobium roseum (strain ATCC 27502 / DSM 5159 / P-2) protein is Bifunctional protein FolD.